Reading from the N-terminus, the 511-residue chain is MKREHNHRESSAGEGGSSSMTTVIKEEAAGVDELLVVLGYKVRSSDMADVAHKLEQLEMVLGDGISNLSDETVHYNPSDLSGWVESMLSDLDPTRIQEKPDSEYDLRAIPGSAVYPRDEHVTRRSKRTRIESELSSTRSVVVLDSQETGVRLVHALLACAEAVQQNNLKLADALVKHVGLLASSQAGAMRKVATYFAEGLARRIYRIYPRDDVALSSFSDTLQIHFYESCPYLKFAHFTANQAILEVFATAEKVHVIDLGLNHGLQWPALIQALALRPNGPPDFRLTGIGYSLTDIQEVGWKLGQLASTIGVNFEFKSIALNNLSDLKPEMLDIRPGLESVAVNSVFELHRLLAHPGSIDKFLSTIKSIRPDIMTVVEQEANHNGTVFLDRFTESLHYYSSLFDSLEGPPSQDRVMSELFLGRQILNLVACEGEDRVERHETLNQWRNRFGLGGFKPVSIGSNAYKQASMLLALYAGADGYNVEENEGCLLLGWQTRPLIATSAWRINRVE.

Residues 1 to 11 (MKREHNHRESS) are compositionally biased toward basic and acidic residues. The segment at 1–20 (MKREHNHRESSAGEGGSSSM) is disordered. Positions 32–36 (DELLV) match the DELLA motif motif. The LEXLE motif signature appears at 54–58 (LEQLE). Positions 73–77 (VHYNP) match the VHYNP motif motif. The GRAS domain maps to 143–506 (LDSQETGVRL…RPLIATSAWR (364 aa)). A leucine repeat I (LRI) region spans residues 150–204 (VRLVHALLACAEAVQQNNLKLADALVKHVGLLASSQAGAMRKVATYFAEGLARRI). Positions 157 to 161 (LACAE) match the LxCxE motif motif. Positions 223–288 (QIHFYESCPY…NGPPDFRLTG (66 aa)) are VHIID. The VHIID motif lies at 254–258 (VHVID). The tract at residues 298 to 330 (EVGWKLGQLASTIGVNFEFKSIALNNLSDLKPE) is leucine repeat II (LRII). The PFYRE stretch occupies residues 341 to 427 (VAVNSVFELH…ELFLGRQILN (87 aa)). The short motif at 349-353 (LHRLL) is the LXXLL motif element. Positions 430-506 (ACEGEDRVER…RPLIATSAWR (77 aa)) are SAW.

This sequence belongs to the GRAS family. DELLA subfamily. Interacts directly with the GID2/SLY1 component of the SCF(GID2) complex. Interacts (via N-terminus) with GID1A, GID1B and GID1B (via N-terminus). Interacts with the BOI proteins BOI, BRG1, BRG2 and BRG3. Binds to and coactivates GAF1/IDD2 and ENY/IDD1. Phosphorylated. Post-translationally, may be ubiquitinated, as suggested by its interaction with GID2. Ubiquitination is however unsure since in contrast to other DELLA proteins, it is not ubiquitinated and degraded upon GA application. Nevertheless, ubiquitination may be triggered by other processes. As to expression, predominantly expressed in germinating seeds and flowers and siliques. Highly expressed in inflorescences and weakly or not expressed in rosette leaves, etiolated seedlings, siliques, mature stems and roots. RGA and GAI transcripts were detected at slightly varying levels in all tissues examined. RGL2 signal was undetected, and RGL3 signal was very weak in all tissues examined (rosette leaves, seedlings, inflorescences, and siliques) except inflorescences. In the flower, it is expressed in developing ovules as well as in developing anthers throughout microspore development.

Its subcellular location is the nucleus. Its function is as follows. Probable transcriptional regulator that acts as a repressor of the gibberellin (GA) signaling pathway. No effect of the BOI proteins on its stability. Probably acts by participating in large multiprotein complexes that repress transcription of GA-inducible genes. Has overlapping but distinct roles in GA signaling compared to RGA and GAI. Regulates the floral development. May also participate in seed germination and in ovule and anther development. Its activity is probably regulated by other phytohormones such as auxin and ethylene. The sequence is that of DELLA protein RGL1 (RGL1) from Arabidopsis thaliana (Mouse-ear cress).